The chain runs to 296 residues: Peptide transport system permease protein SapC (296 aa).

At M1 to P28 the chain is on the cytoplasmic side. The chain crosses the membrane as a helical span at residues A29 to I49. Over A50–T98 the chain is Periplasmic. Residues V99–V119 traverse the membrane as a helical segment. Positions V99 to G284 constitute an ABC transmembrane type-1 domain. At A120–H133 the chain is on the cytoplasmic side. A helical membrane pass occupies residues I134–A154. Over G155 to D196 the chain is Periplasmic. Residues G197–V217 form a helical membrane-spanning segment. Residues T218–R222 are Cytoplasmic-facing. A helical membrane pass occupies residues A223–L243. The Periplasmic portion of the chain corresponds to P244–E257. The chain crosses the membrane as a helical span at residues L258 to L278. The Cytoplasmic portion of the chain corresponds to L279–E296.

This sequence belongs to the binding-protein-dependent transport system permease family. OppBC subfamily.

It localises to the cell inner membrane. Functionally, involved in a peptide intake transport system that plays a role in the resistance to antimicrobial peptides. In Salmonella typhi, this protein is Peptide transport system permease protein SapC (sapC).